Reading from the N-terminus, the 520-residue chain is MEGVLYKWTNYLSGWQPRWFLLCGGILSYYDSPEDAWKGCKGSIQMAVCEIQVHSVDNTRMDLIIPGEQYFYLKARSVAERQRWLVALGSAKACLTDSRTQKEKEFAENTENLKTKMSELRLYCDLLVQQVDKTKEVATAGVADSEEGIDVGTLLRSTCNTFLKTLEECMQIANAAFTSELLYHTPPGSPQLAVLKSSKMKHPIIPIHNSLERPIELNSCENGSLSVEVNGDEELLMKTKKSSLYLKSTKADCNISSEENTDGNTTVQGERMKEDGEENLESHDRDLAQPGSDSVCSPESPWEDSEEVIPTFFSTMNTSFSDIELLEDSGIPTEAFLASCYAVVPVLDKLGPTVFAPVKMDLVGNIKKVNQKYITNKEEFTTLQKIVLHEVEADVARVRNSATEALLWLKRGLKFLKGFLTEVKNGEKDIQTALNNAYGKTLRQHHGWVVRGVFALALRAAPSYEDFVAALTIKEGDHQKEAFSAGMQRDLSLYLPAMEKQLAILDTLYEIHGLESDEVV.

A PH domain is found at 1–93 (MEGVLYKWTN…WLVALGSAKA (93 aa)). Position 139 is a phosphothreonine (Thr139). A Phosphoserine modification is found at Ser145. Thr153 bears the Phosphothreonine mark. Over residues 255–268 (ISSEENTDGNTTVQ) the composition is skewed to polar residues. Positions 255-303 (ISSEENTDGNTTVQGERMKEDGEENLESHDRDLAQPGSDSVCSPESPWE) are disordered. Over residues 270 to 287 (ERMKEDGEENLESHDRDL) the composition is skewed to basic and acidic residues. Residues 311–520 (TFFSTMNTSF…IHGLESDEVV (210 aa)) are glycolipid transfer protein homology domain.

In terms of assembly, homodimer. Interacts with ARF1; the interaction together with phosphatidylinositol 4-phosphate binding is required for FAPP2 GlcCer transfer ability.

The protein resides in the golgi apparatus. It is found in the trans-Golgi network membrane. It localises to the membrane. Its function is as follows. Cargo transport protein that is required for apical transport from the trans-Golgi network (TGN). Transports AQP2 from the trans-Golgi network (TGN) to sites of AQP2 phosphorylation. Mediates the non-vesicular transport of glucosylceramide (GlcCer) from the trans-Golgi network (TGN) to the plasma membrane and plays a pivotal role in the synthesis of complex glycosphingolipids. Binding of both phosphatidylinositol 4-phosphate (PIP) and ARF1 are essential for the GlcCer transfer ability. Also required for primary cilium formation, possibly by being involved in the transport of raft lipids to the apical membrane, and for membrane tubulation. This is Pleckstrin homology domain-containing family A member 8 (Plekha8) from Rattus norvegicus (Rat).